We begin with the raw amino-acid sequence, 99 residues long: Apolipoprotein C-III (99 aa).

The first 20 residues, 1 to 20, serve as a signal peptide directing secretion; sequence MQPRTLLTVALLALLASARA. A Methionine sulfoxide modification is found at M63. Positions 68–99 are lipid-binding; the sequence is RFLKGYWSKFTDKFTGFWDSNPEDQPTPAIES. The O-linked (GalNAc...) threonine glycan is linked to T94.

It belongs to the apolipoprotein C3 family. Post-translationally, the most abundant glycoforms are characterized by an O-linked disaccharide galactose linked to N-acetylgalactosamine (Gal-GalNAc), further modified with up to 3 sialic acid residues. Less abundant glycoforms are characterized by more complex and fucosylated glycan moieties. O-glycosylated on Thr-94 with a core 1 or possibly core 8 glycan.

It localises to the secreted. Functionally, component of triglyceride-rich very low density lipoproteins (VLDL) and high density lipoproteins (HDL) in plasma. Plays a multifaceted role in triglyceride homeostasis. Intracellularly, promotes hepatic very low density lipoprotein 1 (VLDL1) assembly and secretion; extracellularly, attenuates hydrolysis and clearance of triglyceride-rich lipoproteins (TRLs). Impairs the lipolysis of TRLs by inhibiting lipoprotein lipase and the hepatic uptake of TRLs by remnant receptors. Formed of several curved helices connected via semiflexible hinges, so that it can wrap tightly around the curved micelle surface and easily adapt to the different diameters of its natural binding partners. The polypeptide is Apolipoprotein C-III (Apoc3) (Mus musculus (Mouse)).